Here is a 352-residue protein sequence, read N- to C-terminus: Peptide chain release factor 1 (352 aa).

Q229 carries the post-translational modification N5-methylglutamine.

The protein belongs to the prokaryotic/mitochondrial release factor family. Methylated by PrmC. Methylation increases the termination efficiency of RF1.

The protein localises to the cytoplasm. Functionally, peptide chain release factor 1 directs the termination of translation in response to the peptide chain termination codons UAG and UAA. The chain is Peptide chain release factor 1 from Acidiphilium cryptum (strain JF-5).